The chain runs to 335 residues: DNA-directed RNA polymerase subunit alpha (335 aa).

The segment at 1–233 is alpha N-terminal domain (alpha-NTD); it reads MMLNATEFLT…QQISIFVDLE (233 aa). The interval 247–335 is alpha C-terminal domain (alpha-CTD); the sequence is VDPVLLRPVD…VDDRFSYRSR (89 aa).

It belongs to the RNA polymerase alpha chain family. Homodimer. The RNAP catalytic core consists of 2 alpha, 1 beta, 1 beta' and 1 omega subunit. When a sigma factor is associated with the core the holoenzyme is formed, which can initiate transcription.

The catalysed reaction is RNA(n) + a ribonucleoside 5'-triphosphate = RNA(n+1) + diphosphate. Its function is as follows. DNA-dependent RNA polymerase catalyzes the transcription of DNA into RNA using the four ribonucleoside triphosphates as substrates. This is DNA-directed RNA polymerase subunit alpha from Psychrobacter sp. (strain PRwf-1).